Reading from the N-terminus, the 465-residue chain is Ribulose bisphosphate carboxylase large chain (465 aa).

Position 4 is an N6,N6,N6-trimethyllysine (K4). T163 serves as a coordination point for substrate. Catalysis depends on K165, which acts as the Proton acceptor. K167 serves as a coordination point for substrate. Mg(2+)-binding residues include K191, D193, and E194. N6-carboxylysine is present on K191. H284 acts as the Proton acceptor in catalysis. Residues R285, H317, and S369 each coordinate substrate.

This sequence belongs to the RuBisCO large chain family. Type I subfamily. In terms of assembly, heterohexadecamer of 8 large chains and 8 small chains; disulfide-linked. The disulfide link is formed within the large subunit homodimers. It depends on Mg(2+) as a cofactor. In terms of processing, the disulfide bond which can form in the large chain dimeric partners within the hexadecamer appears to be associated with oxidative stress and protein turnover.

It is found in the plastid. Its subcellular location is the chloroplast. The enzyme catalyses 2 (2R)-3-phosphoglycerate + 2 H(+) = D-ribulose 1,5-bisphosphate + CO2 + H2O. It carries out the reaction D-ribulose 1,5-bisphosphate + O2 = 2-phosphoglycolate + (2R)-3-phosphoglycerate + 2 H(+). RuBisCO catalyzes two reactions: the carboxylation of D-ribulose 1,5-bisphosphate, the primary event in carbon dioxide fixation, as well as the oxidative fragmentation of the pentose substrate in the photorespiration process. Both reactions occur simultaneously and in competition at the same active site. The sequence is that of Ribulose bisphosphate carboxylase large chain from Trochodendron aralioides (Wheel tree).